The sequence spans 428 residues: CinA-like protein (428 aa).

It belongs to the CinA family.

This chain is CinA-like protein, found in Chlorobium phaeovibrioides (strain DSM 265 / 1930) (Prosthecochloris vibrioformis (strain DSM 265)).